We begin with the raw amino-acid sequence, 415 residues long: UDP-N-acetylglucosamine 1-carboxyvinyltransferase (415 aa).

Phosphoenolpyruvate is bound at residue 22 to 23 (KN). Residue Arg92 coordinates UDP-N-acetyl-alpha-D-glucosamine. The active-site Proton donor is the Cys116. Cys116 carries the 2-(S-cysteinyl)pyruvic acid O-phosphothioketal modification. UDP-N-acetyl-alpha-D-glucosamine-binding positions include 121-125 (RPIDL), Asp304, and Val326.

Belongs to the EPSP synthase family. MurA subfamily.

Its subcellular location is the cytoplasm. It catalyses the reaction phosphoenolpyruvate + UDP-N-acetyl-alpha-D-glucosamine = UDP-N-acetyl-3-O-(1-carboxyvinyl)-alpha-D-glucosamine + phosphate. The protein operates within cell wall biogenesis; peptidoglycan biosynthesis. Functionally, cell wall formation. Adds enolpyruvyl to UDP-N-acetylglucosamine. The chain is UDP-N-acetylglucosamine 1-carboxyvinyltransferase from Halothermothrix orenii (strain H 168 / OCM 544 / DSM 9562).